The following is a 300-amino-acid chain: Ribosomal protein L11 methyltransferase (300 aa).

Residues threonine 152, glycine 173, aspartate 195, and asparagine 234 each contribute to the S-adenosyl-L-methionine site.

The protein belongs to the methyltransferase superfamily. PrmA family.

The protein resides in the cytoplasm. It catalyses the reaction L-lysyl-[protein] + 3 S-adenosyl-L-methionine = N(6),N(6),N(6)-trimethyl-L-lysyl-[protein] + 3 S-adenosyl-L-homocysteine + 3 H(+). In terms of biological role, methylates ribosomal protein L11. This Burkholderia pseudomallei (strain 1710b) protein is Ribosomal protein L11 methyltransferase.